A 101-amino-acid polypeptide reads, in one-letter code: Small ribosomal subunit protein uS14 (101 aa).

A disordered region spans residues 50–70 (SLPRDSSPSRQRKRCRQTGRP). Basic residues predominate over residues 59 to 68 (RQRKRCRQTG).

Belongs to the universal ribosomal protein uS14 family. Part of the 30S ribosomal subunit. Contacts proteins S3 and S10.

Its function is as follows. Binds 16S rRNA, required for the assembly of 30S particles and may also be responsible for determining the conformation of the 16S rRNA at the A site. The chain is Small ribosomal subunit protein uS14 from Erwinia tasmaniensis (strain DSM 17950 / CFBP 7177 / CIP 109463 / NCPPB 4357 / Et1/99).